Consider the following 138-residue polypeptide: ATP synthase epsilon chain (138 aa).

The protein belongs to the ATPase epsilon chain family. As to quaternary structure, F-type ATPases have 2 components, CF(1) - the catalytic core - and CF(0) - the membrane proton channel. CF(1) has five subunits: alpha(3), beta(3), gamma(1), delta(1), epsilon(1). CF(0) has three main subunits: a, b and c.

Its subcellular location is the cell membrane. In terms of biological role, produces ATP from ADP in the presence of a proton gradient across the membrane. This is ATP synthase epsilon chain from Polynucleobacter asymbioticus (strain DSM 18221 / CIP 109841 / QLW-P1DMWA-1) (Polynucleobacter necessarius subsp. asymbioticus).